A 67-amino-acid chain; its full sequence is ATP synthase F(0) complex subunit 8 (67 aa).

A helical membrane pass occupies residues 8–24 (TWFTVILSMIISLFMLL). The residue at position 54 (lysine 54) is an N6-acetyllysine; alternate. At lysine 54 the chain carries N6-succinyllysine; alternate. N6-acetyllysine is present on lysine 57.

The protein belongs to the ATPase protein 8 family. As to quaternary structure, component of the ATP synthase complex composed at least of ATP5F1A/subunit alpha, ATP5F1B/subunit beta, ATP5MC1/subunit c (homooctomer), MT-ATP6/subunit a, MT-ATP8/subunit 8, ATP5ME/subunit e, ATP5MF/subunit f, ATP5MG/subunit g, ATP5MK/subunit k, ATP5MJ/subunit j, ATP5F1C/subunit gamma, ATP5F1D/subunit delta, ATP5F1E/subunit epsilon, ATP5PF/subunit F6, ATP5PB/subunit b, ATP5PD/subunit d, ATP5PO/subunit OSCP. ATP synthase complex consists of a soluble F(1) head domain (subunits alpha(3) and beta(3)) - the catalytic core - and a membrane F(0) domain - the membrane proton channel (subunits c, a, 8, e, f, g, k and j). These two domains are linked by a central stalk (subunits gamma, delta, and epsilon) rotating inside the F1 region and a stationary peripheral stalk (subunits F6, b, d, and OSCP). Interacts with PRICKLE3.

Its subcellular location is the mitochondrion membrane. Functionally, subunit 8, of the mitochondrial membrane ATP synthase complex (F(1)F(0) ATP synthase or Complex V) that produces ATP from ADP in the presence of a proton gradient across the membrane which is generated by electron transport complexes of the respiratory chain. ATP synthase complex consist of a soluble F(1) head domain - the catalytic core - and a membrane F(1) domain - the membrane proton channel. These two domains are linked by a central stalk rotating inside the F(1) region and a stationary peripheral stalk. During catalysis, ATP synthesis in the catalytic domain of F(1) is coupled via a rotary mechanism of the central stalk subunits to proton translocation. In vivo, can only synthesize ATP although its ATP hydrolase activity can be activated artificially in vitro. Part of the complex F(0) domain. This chain is ATP synthase F(0) complex subunit 8, found in Cavia porcellus (Guinea pig).